The following is a 343-amino-acid chain: Heat-inducible transcription repressor HrcA (343 aa).

Belongs to the HrcA family.

In terms of biological role, negative regulator of class I heat shock genes (grpE-dnaK-dnaJ and groELS operons). Prevents heat-shock induction of these operons. This chain is Heat-inducible transcription repressor HrcA, found in Mycolicibacterium gilvum (strain PYR-GCK) (Mycobacterium gilvum (strain PYR-GCK)).